The following is a 303-amino-acid chain: Probable alpha-L-glutamate ligase (303 aa).

Residues 104-287 (LQLLAREGID…IAGMMIEFIE (184 aa)) form the ATP-grasp domain. Residues lysine 141, 178–179 (EY), aspartate 187, and 211–213 (RSN) each bind ATP. The Mg(2+) site is built by aspartate 248, glutamate 260, and asparagine 262. The Mn(2+) site is built by aspartate 248, glutamate 260, and asparagine 262.

It belongs to the RimK family. It depends on Mg(2+) as a cofactor. Mn(2+) is required as a cofactor.

This is Probable alpha-L-glutamate ligase from Pectobacterium carotovorum subsp. carotovorum (strain PC1).